A 152-amino-acid polypeptide reads, in one-letter code: Transcription elongation factor Spt5 (152 aa).

The 30-residue stretch at 99-128 (PGDVVEVISGPFRGTQAQVIRVEEAKGEVV) folds into the KOW domain.

It belongs to the archaeal Spt5 family. In terms of assembly, heterodimer composed of Spt4 and Spt5. Interacts with RNA polymerase (RNAP).

Stimulates transcription elongation. The sequence is that of Transcription elongation factor Spt5 from Saccharolobus solfataricus (strain ATCC 35092 / DSM 1617 / JCM 11322 / P2) (Sulfolobus solfataricus).